The chain runs to 401 residues: Adenylosuccinate synthetase (401 aa).

GTP is bound by residues 12-18 (GDEGKGK) and 40-42 (GHT). Aspartate 13 acts as the Proton acceptor in catalysis. Residues aspartate 13 and glycine 40 each contribute to the Mg(2+) site. IMP contacts are provided by residues 13-16 (DEGK), 38-41 (NAGH), threonine 128, arginine 142, glutamine 212, threonine 227, and arginine 290. Histidine 41 functions as the Proton donor in the catalytic mechanism. Residue 286 to 292 (ATTRRPR) participates in substrate binding. Residues arginine 292, 318-320 (KAD), and 390-392 (STG) contribute to the GTP site.

The protein belongs to the adenylosuccinate synthetase family. In terms of assembly, homodimer. Mg(2+) serves as cofactor.

It is found in the cytoplasm. The catalysed reaction is IMP + L-aspartate + GTP = N(6)-(1,2-dicarboxyethyl)-AMP + GDP + phosphate + 2 H(+). Its pathway is purine metabolism; AMP biosynthesis via de novo pathway; AMP from IMP: step 1/2. Plays an important role in the de novo pathway of purine nucleotide biosynthesis. Catalyzes the first committed step in the biosynthesis of AMP from IMP. This is Adenylosuccinate synthetase from Pseudothermotoga lettingae (strain ATCC BAA-301 / DSM 14385 / NBRC 107922 / TMO) (Thermotoga lettingae).